A 180-amino-acid polypeptide reads, in one-letter code: MKKVVLFTLLITGLSFAGEQKEANESMILFWKAVNTVILLGLVYYFGGKHIKKFLNGRRENVANMVLEAQKMREDSQKALEDAKRKLEEAKYKLEESIKISKETAEREREHAIMQANEIAERIKMQAKETINIEIRKAEAKLKKYAAEKALEVSKSLIESSINPQTSNELIKKTIKGLEA.

A helical transmembrane segment spans residues serine 26–glycine 48.

The protein belongs to the ATPase B chain family. F-type ATPases have 2 components, F(1) - the catalytic core - and F(0) - the membrane proton channel. F(1) has five subunits: alpha(3), beta(3), gamma(1), delta(1), epsilon(1). F(0) has three main subunits: a(1), b(2) and c(10-14). The alpha and beta chains form an alternating ring which encloses part of the gamma chain. F(1) is attached to F(0) by a central stalk formed by the gamma and epsilon chains, while a peripheral stalk is formed by the delta and b chains.

It is found in the cell inner membrane. F(1)F(0) ATP synthase produces ATP from ADP in the presence of a proton or sodium gradient. F-type ATPases consist of two structural domains, F(1) containing the extramembraneous catalytic core and F(0) containing the membrane proton channel, linked together by a central stalk and a peripheral stalk. During catalysis, ATP synthesis in the catalytic domain of F(1) is coupled via a rotary mechanism of the central stalk subunits to proton translocation. Functionally, component of the F(0) channel, it forms part of the peripheral stalk, linking F(1) to F(0). The polypeptide is ATP synthase subunit b (Sulfurihydrogenibium sp. (strain YO3AOP1)).